A 108-amino-acid polypeptide reads, in one-letter code: Insulin (108 aa).

A signal peptide spans 1–21 (MAVWLQAGALLVLLVVSSVST). Intrachain disulfides connect C30/C94, C42/C107, and C93/C98. Positions 54–84 (DVEPLLGFLPPKSAQETEVADFAFKDHAELI) are cleaved as a propeptide — c peptide.

It belongs to the insulin family. As to quaternary structure, heterodimer of a B chain and an A chain linked by two disulfide bonds.

The protein localises to the secreted. Insulin decreases blood glucose concentration. It increases cell permeability to monosaccharides, amino acids and fatty acids. It accelerates glycolysis, the pentose phosphate cycle, and glycogen synthesis in liver. In Danio rerio (Zebrafish), this protein is Insulin (ins).